The sequence spans 125 residues: Protein ApaG (125 aa).

The region spanning 1–125 (MIDAPRIIVQ…FRLAIPSLIN (125 aa)) is the ApaG domain.

The sequence is that of Protein ApaG from Edwardsiella ictaluri (strain 93-146).